A 132-amino-acid chain; its full sequence is PGA2-homolog C27.01c (132 aa).

Residues W17–L34 traverse the membrane as a helical segment. 2 disordered regions span residues L50–F90 and E106–D132. The span at E62–F75 shows a compositional bias: basic and acidic residues. The span at D76–D87 shows a compositional bias: acidic residues. At T77 the chain carries Phosphothreonine. Over residues E106–P115 the composition is skewed to basic and acidic residues. The segment covering Y119–D132 has biased composition (acidic residues).

The protein belongs to the PGA2 family.

It localises to the endoplasmic reticulum membrane. It is found in the nucleus membrane. Involved processing and trafficking glycosylated proteins. This chain is PGA2-homolog C27.01c, found in Schizosaccharomyces pombe (strain 972 / ATCC 24843) (Fission yeast).